A 129-amino-acid chain; its full sequence is Trefoil factor 2 (129 aa).

Positions 1-23 (MGPRGLQLLAVLLALGLCAPAGA) are cleaved as a signal peptide. Gln24 carries the pyrrolidone carboxylic acid modification. P-type domains lie at 29–73 (CQCS…FHPL) and 79–122 (EQCV…FFPI). Disulfide bonds link Cys29–Cys127, Cys31–Cys58, Cys42–Cys57, Cys52–Cys69, Cys81–Cys107, Cys91–Cys106, and Cys101–Cys118.

It localises to the secreted. Inhibits gastrointestinal motility and gastric acid secretion. Could function as a structural component of gastric mucus, possibly by stabilizing glycoproteins in the mucus gel through interactions with carbohydrate side chains. In Canis lupus familiaris (Dog), this protein is Trefoil factor 2 (TFF2).